Reading from the N-terminus, the 512-residue chain is MDKFKRDGEEYISYQRRFLYPLLFQEDLYAIAYDHYFNRSSCFEPMENSSSNDRFSFLTVKRLISRIHQQNDLIISFLNCDQNPFVGHNSSFYSELVLEGPTVVLEVPFLMRSKHSLEKKNEWKSFRSIHSIFSFMEDKFPHPNSISDMRIPHSIHSEIFIRTFRRWVRDAPSLHLSRSVLHEHRNSSENLYKSILIAPEGNTKFFLFLWNYYAYECESLLVPLRKRSSHSRLLSYGAFLEQIHSYRKIEHIVIFSRRNLAKSIWSLKDSSISYVRYGERSIMALKGAHSSVRRWRYYLSIFWRCYFHFWSQPYRIRIDELSNNCSSFLGYFLGVRMNTSVVRIKMLDDLFITDLITNEFDSIAPIIPLIGLLAKERFCDISGRPISKLAWTGLKDDDILDRFDRICRNIIDYYSGSFNKDGSYRMKYILRLPCAKTLACRHKSTIRVVWEEFGSELFTKSFPKEGELISPFFSKTCSQRKRIWHSDILRINLPANFWQNKRNRQIETLFGL.

Belongs to the intron maturase 2 family. MatK subfamily.

The protein localises to the plastid. It localises to the chloroplast. In terms of biological role, usually encoded in the trnK tRNA gene intron. Probably assists in splicing its own and other chloroplast group II introns. The protein is Maturase K of Ginkgo biloba (Ginkgo).